The sequence spans 2559 residues: Nonribosomal peptide synthetase asqK (2559 aa).

Residues 90-474 are adenylation 1; the sequence is YRPSHTAIHA…SRKDSQVKIR (385 aa). A Carrier 1 domain is found at 593–669; it reads TNIEQLVHEL…SLVHYPAGLE (77 aa). Ser-627 is modified (O-(pantetheine 4'-phosphoryl)serine). Positions 695–989 are condensation 1; sequence TVEQSFSQAR…GNVQCIRTKV (295 aa). An adenylation 2 region spans residues 1155 to 1562; it reads FDEQVRAQTD…GRMDQQVKVR (408 aa). The tract at residues 1681–1776 is methyltransferase; it reads LEIGTGSGMI…NTIKDLVRQG (96 aa). The Carrier 2 domain maps to 2090–2164; sequence AFTSEIERAV…GLAQHLQGLG (75 aa). At Ser-2124 the chain carries O-(pantetheine 4'-phosphoryl)serine. The interval 2261–2409 is condensation 2; the sequence is FDGVSLSAIL…VNRCLLRVKV (149 aa).

This sequence belongs to the NRP synthetase family.

The enzyme catalyses O-methyl-L-tyrosine + anthranilate + S-adenosyl-L-methionine + 2 ATP = (-)-4'-methoxycyclopeptine + 2 AMP + S-adenosyl-L-homocysteine + 2 diphosphate + 2 H(+). The catalysed reaction is anthranilate + L-phenylalanine + S-adenosyl-L-methionine + 2 ATP = cyclopeptine + 2 AMP + S-adenosyl-L-homocysteine + 2 diphosphate + 2 H(+). It functions in the pathway secondary metabolite biosynthesis. It participates in alkaloid biosynthesis. The protein operates within mycotoxin biosynthesis. Functionally, nonribosomal peptide synthetase; part of the gene cluster that mediates the biosynthesis of the aspoquinolone mycotoxins. The first stage is catalyzed by the nonribosomal peptide synthetase asqK that condenses anthranilic acid and O-methyl-L-tyrosine to produce 4'-methoxycyclopeptin. AsqK is also able to use anthranilic acid and L-phenylalanine as substrates to produce cyclopeptin, but at a tenfold lower rate. Within the pathway, 4'-methoxycyclopeptin is then converted to 4'-methoxydehydrocyclopeptin by the ketoglutarate-dependent dioxygenase asqJ. AsqJ also converts its first product 4'-methoxydehydrocyclopeptin to 4'-methoxycyclopenin. The following conversion of 4'-methoxycyclopenin into 4'-methoxyviridicatin is catalyzed by the cyclopenase asqI. 4'-methoxyviridicatin is the precursor of quinolone natural products, and is further converted to quinolinone B. The prenyltransferase asqH1 then catalyzes the canonical Friedel-Crafts alkylation of quinolinone B with dimethylallyl cation to yield dimethylallyl quinolone, which is subjected to FAD-dependent dehydrogenation by the FAD-linked oxidoreductase asqF to yield conjugated aryl diene. The delta(3') double bond then serves as the site of the second alkylation with DMAPP catalyzed by the prenyltransferase asqH2 to yield a carbenium ion intermediate, which can be attacked by H(2)O to yield a styrenyl quinolone containing a C3'-hydroxyprenyl chain. The FAD-dependent monooxygenase asqG performs epoxidation of the terminal C7'-C8' olefin. Finally, after dehydratation of the epoxide at C3 by asqC, the quinolone epoxide rearrangement protein asqO catalyzes an enzymatic 3-exo-tet cyclization to yield the cyclopropyl-THF ring system in aspoquinolone. The sequence is that of Nonribosomal peptide synthetase asqK from Emericella nidulans (strain FGSC A4 / ATCC 38163 / CBS 112.46 / NRRL 194 / M139) (Aspergillus nidulans).